A 373-amino-acid chain; its full sequence is Glutamine synthetase (373 aa).

Alanine 2 is modified (N-acetylalanine). The interval 2–25 is required for glutamine-induced ubiquitination by CRL4(CRBN) and proteasomal degradation; sequence ATSASSHLNKGIKQMYMSLPQGEK. N6-acetyllysine occurs at positions 11 and 14. Residues 24–106 form the GS beta-grasp domain; the sequence is EKVQAMYIWV…VLCEVFKYNR (83 aa). Residue tyrosine 104 is modified to Phosphotyrosine. The GS catalytic domain maps to 113-373; that stretch reads LRHICKRIMD…TGDEPFQYKN (261 aa). Position 134 (glutamate 134) interacts with ATP. Mn(2+) is bound by residues glutamate 134, glutamate 136, glutamate 196, and glutamate 203. 203-208 provides a ligand contact to ATP; sequence EFQIGP. 246 to 247 contributes to the L-glutamate binding site; that stretch reads NW. A Mn(2+)-binding site is contributed by histidine 253. Residues 255-257, arginine 319, and arginine 324 each bind ATP; that span reads NFS. Arginine 319 contributes to the L-glutamate binding site. An ADP-binding site is contributed by 336 to 338; sequence YFE. Position 338 (glutamate 338) interacts with Mn(2+). Arginine 340 contacts L-glutamate. At serine 343 the chain carries Phosphoserine.

The protein belongs to the glutamine synthetase family. As to quaternary structure, decamer; composed of two pentamers. Interacts with PALMD. Interacts with RHOJ. Interacts with BEST2; this interaction tethers a fraction of GLUL to the membrane, causing a decrease of cytosolic glutamine synthase (GS) activity and inhibits the chloride channel activity of BEST2 by affecting the gating at the aperture in the absence of intracellular glutamate. It depends on Mg(2+) as a cofactor. Requires Mn(2+) as cofactor. In terms of processing, acetylated by EP300/p300; acetylation is stimulated by increased glutamine levels and promotes ubiquitin-mediated proteasomal degradation. Post-translationally, palmitoylated; undergoes autopalmitoylation. Ubiquitinated by ZNRF1. Ubiquitinated by the DCX (DDB1-CUL4-X-box) E3 ubiquitin-protein ligase complex called CRL4(CRBN), leading to proteasomal degradation. Expressed in microvascular endothelial cells.

The protein localises to the cytoplasm. It is found in the cytosol. Its subcellular location is the microsome. It localises to the mitochondrion. The protein resides in the cell membrane. It carries out the reaction L-glutamate + NH4(+) + ATP = L-glutamine + ADP + phosphate + H(+). The catalysed reaction is L-cysteinyl-[protein] + hexadecanoyl-CoA = S-hexadecanoyl-L-cysteinyl-[protein] + CoA. With respect to regulation, glutamine synthetase activity is inhibited by methionine sulfoximine (MSO). Glutamine synthetase that catalyzes the ATP-dependent conversion of glutamate and ammonia to glutamine. Its role depends on tissue localization: in the brain, it regulates the levels of toxic ammonia and converts neurotoxic glutamate to harmless glutamine, whereas in the liver, it is one of the enzymes responsible for the removal of ammonia. Plays a key role in ammonium detoxification during erythropoiesis: the glutamine synthetase activity is required to remove ammonium generated by porphobilinogen deaminase (HMBS) during heme biosynthesis to prevent ammonium accumulation and oxidative stress. Essential for proliferation of fetal skin fibroblasts. Independently of its glutamine synthetase activity, required for endothelial cell migration during vascular development. Involved in angiogenesis by regulating membrane localization and activation of the GTPase RHOJ, possibly by promoting RHOJ palmitoylation. May act as a palmitoyltransferase for RHOJ: able to autopalmitoylate and then transfer the palmitoyl group to RHOJ. Plays a role in ribosomal 40S subunit biogenesis. Through the interaction with BEST2, inhibits BEST2 channel activity by affecting the gating at the aperture in the absence of intracellular L-glutamate, but sensitizes BEST2 to intracellular L-glutamate, which promotes the opening of BEST2 and thus relieves its inhibitory effect on BEST2. The chain is Glutamine synthetase from Mus musculus (Mouse).